The following is a 417-amino-acid chain: Hydroxysteroid dehydrogenase-like protein 2 (417 aa).

Residues 17-23 (GASRGIG), Lys-42, and Asp-74 each bind NADP(+). The active-site Proton acceptor is Tyr-168. Lys-172 lines the NADP(+) pocket. One can recognise an SCP2 domain in the interval 306–414 (SSPLQETFKA…KLEKILGQMN (109 aa)).

The protein belongs to the short-chain dehydrogenases/reductases (SDR) family.

It is found in the peroxisome. Its subcellular location is the mitochondrion. Functionally, has apparently no steroid dehydrogenase activity. Might act as a metabolic regulator that affects systemic adaptation to nutritional cues. The sequence is that of Hydroxysteroid dehydrogenase-like protein 2 (hsdl2) from Xenopus tropicalis (Western clawed frog).